We begin with the raw amino-acid sequence, 227 residues long: Probable septum site-determining protein MinC (227 aa).

It belongs to the MinC family. In terms of assembly, interacts with MinD and FtsZ.

Cell division inhibitor that blocks the formation of polar Z ring septums. Rapidly oscillates between the poles of the cell to destabilize FtsZ filaments that have formed before they mature into polar Z rings. Prevents FtsZ polymerization. The polypeptide is Probable septum site-determining protein MinC (Bacillus pumilus (strain SAFR-032)).